Reading from the N-terminus, the 224-residue chain is Thymidine kinase (224 aa).

ATP contacts are provided by residues 19–26 and 93–96; these read GPMFAGKT and DEVQ. E94 (proton acceptor) is an active-site residue. Residues C150, C153, C188, and H191 each coordinate Zn(2+).

It belongs to the thymidine kinase family. As to quaternary structure, homotetramer.

Its subcellular location is the cytoplasm. It catalyses the reaction thymidine + ATP = dTMP + ADP + H(+). The polypeptide is Thymidine kinase (Mycoplasmoides gallisepticum (strain R(low / passage 15 / clone 2)) (Mycoplasma gallisepticum)).